Consider the following 237-residue polypeptide: Oil body-associated protein 2C (237 aa).

The protein belongs to the OBAP family.

The sequence is that of Oil body-associated protein 2C from Arabidopsis thaliana (Mouse-ear cress).